A 212-amino-acid chain; its full sequence is Peptide methionine sulfoxide reductase MsrA (212 aa).

C51 is an active-site residue.

This sequence belongs to the MsrA Met sulfoxide reductase family.

The enzyme catalyses L-methionyl-[protein] + [thioredoxin]-disulfide + H2O = L-methionyl-(S)-S-oxide-[protein] + [thioredoxin]-dithiol. It catalyses the reaction [thioredoxin]-disulfide + L-methionine + H2O = L-methionine (S)-S-oxide + [thioredoxin]-dithiol. Functionally, has an important function as a repair enzyme for proteins that have been inactivated by oxidation. Catalyzes the reversible oxidation-reduction of methionine sulfoxide in proteins to methionine. This Vibrio parahaemolyticus serotype O3:K6 (strain RIMD 2210633) protein is Peptide methionine sulfoxide reductase MsrA.